The chain runs to 503 residues: Variant surface glycoprotein ILTAT 1.3 (503 aa).

The N-terminal stretch at 1–29 is a signal peptide; sequence MTKAYENRMLLQALVLAAVLCTTHAEGTA. 2 disulfide bridges follow: cysteine 42–cysteine 168 and cysteine 150–cysteine 206. Asparagine 419 and asparagine 432 each carry an N-linked (GlcNAc...) asparagine glycan. Residue aspartate 480 is the site of GPI-anchor amidated aspartate attachment. Positions 481–503 are cleaved as a propeptide — removed in mature form; that stretch reads SSFILNKQFALSVVSAAFAALLF.

It localises to the cell membrane. VSG forms a coat on the surface of the parasite. The trypanosome evades the immune response of the host by expressing a series of antigenically distinct VSGs from an estimated 1000 VSG genes. In Trypanosoma brucei brucei, this protein is Variant surface glycoprotein ILTAT 1.3.